A 225-amino-acid chain; its full sequence is Germin-like protein 3-8 (225 aa).

An N-terminal signal peptide occupies residues 1–25 (MSRTSSAPLLVLSAALAVLASTCIA). Cys34 and Cys57 are oxidised to a cystine. Residues 71–219 (AGLAVASDTD…SFQVDAKIIK (149 aa)) enclose the Cupin type-1 domain. Asn86 carries N-linked (GlcNAc...) asparagine glycosylation. Mn(2+)-binding residues include His119, His121, Glu126, and His165.

It belongs to the germin family. As to quaternary structure, oligomer (believed to be a pentamer but probably hexamer).

The protein resides in the secreted. It localises to the extracellular space. Its subcellular location is the apoplast. In terms of biological role, may play a role in plant defense. Probably has no oxalate oxidase activity even if the active site is conserved. This Oryza sativa subsp. japonica (Rice) protein is Germin-like protein 3-8.